A 292-amino-acid chain; its full sequence is Ribosomal RNA small subunit methyltransferase A (292 aa).

S-adenosyl-L-methionine contacts are provided by N29, L31, G56, E77, D102, and N127.

This sequence belongs to the class I-like SAM-binding methyltransferase superfamily. rRNA adenine N(6)-methyltransferase family. RsmA subfamily.

The protein resides in the cytoplasm. It carries out the reaction adenosine(1518)/adenosine(1519) in 16S rRNA + 4 S-adenosyl-L-methionine = N(6)-dimethyladenosine(1518)/N(6)-dimethyladenosine(1519) in 16S rRNA + 4 S-adenosyl-L-homocysteine + 4 H(+). Its function is as follows. Specifically dimethylates two adjacent adenosines (A1518 and A1519) in the loop of a conserved hairpin near the 3'-end of 16S rRNA in the 30S particle. May play a critical role in biogenesis of 30S subunits. The chain is Ribosomal RNA small subunit methyltransferase A from Bacillus licheniformis (strain ATCC 14580 / DSM 13 / JCM 2505 / CCUG 7422 / NBRC 12200 / NCIMB 9375 / NCTC 10341 / NRRL NRS-1264 / Gibson 46).